An 844-amino-acid polypeptide reads, in one-letter code: Prickle-like protein 2 (844 aa).

Residues 18-126 (FDFQRNSTSD…NVRPFPVTMT (109 aa)) enclose the PET domain. Ser92 is subject to Phosphoserine. LIM zinc-binding domains are found at residues 128–193 (AICE…CLKP), 193–253 (PRCA…LYAE), and 253–317 (EYCD…EDPN). Disordered regions lie at residues 314 to 350 (EDPN…TEEP) and 481 to 519 (ESYS…QQCR). Positions 318–327 (GSDSSDSAFQ) are enriched in polar residues. A phosphoserine mark is found at Ser319, Ser321, and Ser322. Over residues 481–493 (ESYSDMSSQSFSE) the composition is skewed to low complexity. Phosphothreonine occurs at positions 534, 536, and 539. Phosphoserine is present on residues Ser543, Ser546, Ser607, and Ser642. Residues 639 to 709 (MHQSFDFDGG…HLASEREAIS (71 aa)) are disordered. Basic residues predominate over residues 682–692 (FRPHRSRRSRR). Residues 693 to 709 (SRSDNALHLASEREAIS) show a composition bias toward basic and acidic residues. Ser731 is subject to Phosphoserine. The interval 822-844 (STLGGRGQLHSRKRQKSKNCIIS) is disordered. At Cys841 the chain carries Cysteine methyl ester. Cys841 is lipidated: S-farnesyl cysteine. Positions 842 to 844 (IIS) are cleaved as a propeptide — removed in mature form.

The protein belongs to the prickle / espinas / testin family. In terms of tissue distribution, expressed in brain, eye and testis. Additionally in fetal brain, adult cartilage, pancreatic islet, gastric cancer and uterus tumors.

The protein resides in the nucleus membrane. This Homo sapiens (Human) protein is Prickle-like protein 2 (PRICKLE2).